Here is a 292-residue protein sequence, read N- to C-terminus: Protease HtpX (292 aa).

The next 2 membrane-spanning stretches (helical) occupy residues 4 to 24 and 34 to 54; these read IALF…VLSL and GLMI…LLMS. His139 is a Zn(2+) binding site. Glu140 is a catalytic residue. His143 provides a ligand contact to Zn(2+). 2 helical membrane passes run 158–178 and 192–212; these read IVNT…AGFL and MIYF…ASII. Glu221 contributes to the Zn(2+) binding site.

The protein belongs to the peptidase M48B family. It depends on Zn(2+) as a cofactor.

The protein resides in the cell inner membrane. This is Protease HtpX from Serratia proteamaculans (strain 568).